Here is a 638-residue protein sequence, read N- to C-terminus: Threonine--tRNA ligase (638 aa).

The TGS domain occupies 1-61 (MPDIKLPDGS…EQNADLAIIT (61 aa)). Positions 242–533 (DHRRLGKQYD…LIENFAGALP (292 aa)) are catalytic. Positions 333, 384, and 510 each coordinate Zn(2+).

It belongs to the class-II aminoacyl-tRNA synthetase family. Homodimer. Zn(2+) serves as cofactor.

Its subcellular location is the cytoplasm. It carries out the reaction tRNA(Thr) + L-threonine + ATP = L-threonyl-tRNA(Thr) + AMP + diphosphate + H(+). Its function is as follows. Catalyzes the attachment of threonine to tRNA(Thr) in a two-step reaction: L-threonine is first activated by ATP to form Thr-AMP and then transferred to the acceptor end of tRNA(Thr). Also edits incorrectly charged L-seryl-tRNA(Thr). The sequence is that of Threonine--tRNA ligase from Dechloromonas aromatica (strain RCB).